A 1124-amino-acid chain; its full sequence is Angiopoietin-1 receptor (1124 aa).

An N-terminal signal peptide occupies residues 1–22; sequence MDSLASLVLCGVSLLLSGTVEG. Over 23 to 748 the chain is Extracellular; the sequence is AMDLILINSL…ADLGGGKMLL (726 aa). Cysteines 44 and 102 form a disulfide. One can recognise an Ig-like C2-type 1 domain in the interval 44–123; it reads CIASGWRPHE…RTMKMRQQAS (80 aa). Residues Asn-140 and Asn-158 are each glycosylated (N-linked (GlcNAc...) asparagine). EGF-like domains lie at 210 to 252, 254 to 299, and 301 to 341; these read RCEA…RTCE, ACEL…LQCN, and ACHP…LQCE. 13 disulfide bridges follow: Cys-211/Cys-220, Cys-224/Cys-233, Cys-227/Cys-240, Cys-242/Cys-251, Cys-255/Cys-264, Cys-268/Cys-274, Cys-280/Cys-287, Cys-289/Cys-298, Cys-302/Cys-311, Cys-315/Cys-323, Cys-317/Cys-329, Cys-331/Cys-340, and Cys-370/Cys-424. Residues 350–440 enclose the Ig-like C2-type 2 domain; it reads PKIVDLPDHI…GMVEKPFNIS (91 aa). Asn-399, Asn-438, Asn-464, Asn-560, Asn-596, Asn-649, and Asn-691 each carry an N-linked (GlcNAc...) asparagine glycan. 3 consecutive Fibronectin type-III domains span residues 447–541, 545–636, and 641–735; these read PLNA…TASI, PPRG…TLSD, and QPEN…LPES. Residues 749-769 traverse the membrane as a helical segment; the sequence is IAILGSAGMTCLTVLLAFLII. Topologically, residues 770 to 1124 are cytoplasmic; that stretch reads LQLKRANVQR…GIDCSAEEAA (355 aa). The region spanning 824-1096 is the Protein kinase domain; that stretch reads IKFQDVIGEG…QILVSLNRML (273 aa). ATP-binding positions include 830–838 and Lys-855; that span reads IGEGNFGQV. At Tyr-860 the chain carries Phosphotyrosine; by autocatalysis. Asp-964 serves as the catalytic Proton acceptor. 3 positions are modified to phosphotyrosine; by autocatalysis: Tyr-992, Tyr-1102, and Tyr-1108.

The protein belongs to the protein kinase superfamily. Tyr protein kinase family. Tie subfamily. In terms of assembly, homodimer. Heterodimer with TIE1. Interacts with ANGPT1, ANGPT2 and ANGPT4. At cell-cell contacts in quiescent cells, forms a signaling complex composed of ANGPT1 plus TEK molecules from two adjoining cells. In the absence of endothelial cell-cell contacts, interaction with ANGPT1 mediates contacts with the extracellular matrix. Interacts with PTPRB; this promotes endothelial cell-cell adhesion. Interacts with DOK2, GRB2, GRB7, GRB14, PIK3R1 and PTPN11/SHP2. Colocalizes with DOK2 at contacts with the extracellular matrix in migrating cells. Interacts (tyrosine phosphorylated) with TNIP2. Interacts (tyrosine phosphorylated) with SHC1 (via SH2 domain). Post-translationally, proteolytic processing leads to the shedding of the extracellular domain (soluble TIE-2 alias sTIE-2). Autophosphorylated on tyrosine residues in response to ligand binding. Autophosphorylation occurs in trans, i.e. one subunit of the dimeric receptor phosphorylates tyrosine residues on the other subunit. Autophosphorylation occurs in a sequential manner, where Tyr-992 in the kinase activation loop is phosphorylated first, followed by autophosphorylation at Tyr-1108 and at additional tyrosine residues. ANGPT1-induced phosphorylation is impaired during hypoxia, due to increased expression of ANGPT2. Phosphorylation is important for interaction with GRB14, PIK3R1 and PTPN11. Phosphorylation at Tyr-1102 is important for interaction with SHC1, GRB2 and GRB7. Phosphorylation at Tyr-1108 is important for interaction with DOK2 and for coupling to downstream signal transduction pathways in endothelial cells. Dephosphorylated by PTPRB. In terms of processing, ubiquitinated. The phosphorylated receptor is ubiquitinated and internalized, leading to its degradation. In terms of tissue distribution, detected in umbilical vein endothelial cells. Proteolytic processing gives rise to a soluble extracellular domain that is detected in blood plasma (at protein level). Predominantly expressed in endothelial cells and their progenitors, the angioblasts. Has been directly found in placenta and lung, with a lower level in umbilical vein endothelial cells, brain and kidney.

The protein resides in the cell membrane. Its subcellular location is the cell junction. It localises to the focal adhesion. The protein localises to the cytoplasm. It is found in the cytoskeleton. The protein resides in the secreted. The catalysed reaction is L-tyrosyl-[protein] + ATP = O-phospho-L-tyrosyl-[protein] + ADP + H(+). Angiopoietin binding leads to receptor dimerization and activation by autophosphorylation at Tyr-992 on the kinase activation loop. Inhibited by staurosporine, K252a, PP2, damnacanthal, SB203580, CEP-11207, CEP-11981 and CE-245677. Inhibited by triazine, thienopyrimidine and thiazolopyrimidine derivatives. In terms of biological role, tyrosine-protein kinase that acts as a cell-surface receptor for ANGPT1, ANGPT2 and ANGPT4 and regulates angiogenesis, endothelial cell survival, proliferation, migration, adhesion and cell spreading, reorganization of the actin cytoskeleton, but also maintenance of vascular quiescence. Has anti-inflammatory effects by preventing the leakage of pro-inflammatory plasma proteins and leukocytes from blood vessels. Required for normal angiogenesis and heart development during embryogenesis. Required for post-natal hematopoiesis. After birth, activates or inhibits angiogenesis, depending on the context. Inhibits angiogenesis and promotes vascular stability in quiescent vessels, where endothelial cells have tight contacts. In quiescent vessels, ANGPT1 oligomers recruit TEK to cell-cell contacts, forming complexes with TEK molecules from adjoining cells, and this leads to preferential activation of phosphatidylinositol 3-kinase and the AKT1 signaling cascades. In migrating endothelial cells that lack cell-cell adhesions, ANGT1 recruits TEK to contacts with the extracellular matrix, leading to the formation of focal adhesion complexes, activation of PTK2/FAK and of the downstream kinases MAPK1/ERK2 and MAPK3/ERK1, and ultimately to the stimulation of sprouting angiogenesis. ANGPT1 signaling triggers receptor dimerization and autophosphorylation at specific tyrosine residues that then serve as binding sites for scaffold proteins and effectors. Signaling is modulated by ANGPT2 that has lower affinity for TEK, can promote TEK autophosphorylation in the absence of ANGPT1, but inhibits ANGPT1-mediated signaling by competing for the same binding site. Signaling is also modulated by formation of heterodimers with TIE1, and by proteolytic processing that gives rise to a soluble TEK extracellular domain. The soluble extracellular domain modulates signaling by functioning as decoy receptor for angiopoietins. TEK phosphorylates DOK2, GRB7, GRB14, PIK3R1; SHC1 and TIE1. This chain is Angiopoietin-1 receptor, found in Homo sapiens (Human).